The primary structure comprises 421 residues: 3-isopropylmalate dehydratase large subunit (421 aa).

Cys-300, Cys-360, and Cys-363 together coordinate [4Fe-4S] cluster.

This sequence belongs to the aconitase/IPM isomerase family. LeuC type 2 subfamily. In terms of assembly, heterodimer of LeuC and LeuD. Requires [4Fe-4S] cluster as cofactor.

It carries out the reaction (2R,3S)-3-isopropylmalate = (2S)-2-isopropylmalate. It participates in amino-acid biosynthesis; L-leucine biosynthesis; L-leucine from 3-methyl-2-oxobutanoate: step 2/4. Catalyzes the isomerization between 2-isopropylmalate and 3-isopropylmalate, via the formation of 2-isopropylmaleate. The sequence is that of 3-isopropylmalate dehydratase large subunit from Lachnoclostridium phytofermentans (strain ATCC 700394 / DSM 18823 / ISDg) (Clostridium phytofermentans).